A 332-amino-acid polypeptide reads, in one-letter code: Ketol-acid reductoisomerase (NADP(+)) 2 (332 aa).

Residues 2 to 182 (AELFYDADAD…GGTRAGVIRT (181 aa)) form the KARI N-terminal Rossmann domain. NADP(+)-binding positions include 25-28 (YGSQ), Ser-51, Ser-53, and 83-86 (DPIQ). His-108 is a catalytic residue. Position 134 (Gly-134) interacts with NADP(+). Residues 183–328 (TFTEETETDL…KELRKLMSWV (146 aa)) enclose the KARI C-terminal knotted domain. Mg(2+) contacts are provided by Asp-191, Glu-195, Glu-227, and Glu-231. Substrate is bound at residue Ser-252.

The protein belongs to the ketol-acid reductoisomerase family. Mg(2+) serves as cofactor.

It carries out the reaction (2R)-2,3-dihydroxy-3-methylbutanoate + NADP(+) = (2S)-2-acetolactate + NADPH + H(+). The enzyme catalyses (2R,3R)-2,3-dihydroxy-3-methylpentanoate + NADP(+) = (S)-2-ethyl-2-hydroxy-3-oxobutanoate + NADPH + H(+). It functions in the pathway amino-acid biosynthesis; L-isoleucine biosynthesis; L-isoleucine from 2-oxobutanoate: step 2/4. Its pathway is amino-acid biosynthesis; L-valine biosynthesis; L-valine from pyruvate: step 2/4. Involved in the biosynthesis of branched-chain amino acids (BCAA). Catalyzes an alkyl-migration followed by a ketol-acid reduction of (S)-2-acetolactate (S2AL) to yield (R)-2,3-dihydroxy-isovalerate. In the isomerase reaction, S2AL is rearranged via a Mg-dependent methyl migration to produce 3-hydroxy-3-methyl-2-ketobutyrate (HMKB). In the reductase reaction, this 2-ketoacid undergoes a metal-dependent reduction by NADPH to yield (R)-2,3-dihydroxy-isovalerate. The sequence is that of Ketol-acid reductoisomerase (NADP(+)) 2 from Streptomyces coelicolor (strain ATCC BAA-471 / A3(2) / M145).